We begin with the raw amino-acid sequence, 415 residues long: Ankyrin repeat domain-containing protein 10 (415 aa).

ANK repeat units lie at residues 20 to 49 (SLRFPLHRACRDGDLVALCSLLPHTPRAHL), 56 to 85 (YGWTPVHWAAHFGKLECLMQLVRAGASLNV), 90 to 119 (YAQTPAHIAAFGGHPQCLVWLIQAGANINK), and 123 to 152 (EGETPIHKAARSGSLECITALVGSGAHTDL). Residues 303–325 (TGSNGVSNGQPLSSGQASVSANG) are compositionally biased toward polar residues. The disordered stretch occupies residues 303–330 (TGSNGVSNGQPLSSGQASVSANGTEEPE).

The protein is Ankyrin repeat domain-containing protein 10 (Ankrd10) of Mus musculus (Mouse).